An 89-amino-acid chain; its full sequence is Small ribosomal subunit protein uS15 (89 aa).

It belongs to the universal ribosomal protein uS15 family. In terms of assembly, part of the 30S ribosomal subunit. Forms a bridge to the 50S subunit in the 70S ribosome, contacting the 23S rRNA.

Its function is as follows. One of the primary rRNA binding proteins, it binds directly to 16S rRNA where it helps nucleate assembly of the platform of the 30S subunit by binding and bridging several RNA helices of the 16S rRNA. Forms an intersubunit bridge (bridge B4) with the 23S rRNA of the 50S subunit in the ribosome. The chain is Small ribosomal subunit protein uS15 from Pseudomonas putida (strain GB-1).